A 377-amino-acid polypeptide reads, in one-letter code: Lipoyl synthase, mitochondrial (377 aa).

Residues 1-77 constitute a mitochondrion transit peptide; it reads MFRRGGRILN…LPNGSVHKRL (77 aa). The [4Fe-4S] cluster site is built by Cys107, Cys112, Cys118, Cys138, Cys142, Cys145, and Ser353. A Radical SAM core domain is found at 123–342; it reads DKTRATATIM…RKRAEELGFL (220 aa).

It belongs to the radical SAM superfamily. Lipoyl synthase family. The cofactor is [4Fe-4S] cluster.

It localises to the mitochondrion. The enzyme catalyses [[Fe-S] cluster scaffold protein carrying a second [4Fe-4S](2+) cluster] + N(6)-octanoyl-L-lysyl-[protein] + 2 oxidized [2Fe-2S]-[ferredoxin] + 2 S-adenosyl-L-methionine + 4 H(+) = [[Fe-S] cluster scaffold protein] + N(6)-[(R)-dihydrolipoyl]-L-lysyl-[protein] + 4 Fe(3+) + 2 hydrogen sulfide + 2 5'-deoxyadenosine + 2 L-methionine + 2 reduced [2Fe-2S]-[ferredoxin]. It participates in protein modification; protein lipoylation via endogenous pathway; protein N(6)-(lipoyl)lysine from octanoyl-[acyl-carrier-protein]: step 2/2. In terms of biological role, catalyzes the radical-mediated insertion of two sulfur atoms into the C-6 and C-8 positions of the octanoyl moiety bound to the lipoyl domains of lipoate-dependent enzymes, thereby converting the octanoylated domains into lipoylated derivatives. In Schizosaccharomyces japonicus (strain yFS275 / FY16936) (Fission yeast), this protein is Lipoyl synthase, mitochondrial.